A 419-amino-acid chain; its full sequence is Vacuolar aspartic protease (419 aa).

A signal peptide spans 1–22 (MQLSLSALTTVALALTSSLVDA). A Peptidase A1 domain is found at 104-415 (YFTEIQIGTP…DLDKNAVGLA (312 aa)). Residue aspartate 122 is part of the active site. The cysteines at positions 135 and 140 are disulfide-linked. Asparagine 157 carries N-linked (GlcNAc...) asparagine glycosylation. Residue aspartate 307 is part of the active site. A disulfide bridge connects residues cysteine 341 and cysteine 374. Asparagine 358 is a glycosylation site (N-linked (GlcNAc...) asparagine). A Microbody targeting signal motif is present at residues 417–419 (TKV).

This sequence belongs to the peptidase A1 family.

The protein resides in the vacuole. In Candida albicans (Yeast), this protein is Vacuolar aspartic protease (APR1).